A 678-amino-acid chain; its full sequence is F-box/LRR-repeat protein 5 (678 aa).

A hemerythrin-like region spans residues Met-1–Cys-159. His-15, His-57, Glu-58, Glu-61, His-80, His-126, and Glu-130 together coordinate Fe(3+). In terms of domain architecture, F-box spans Ser-202–Leu-248. The tract at residues Tyr-285–Ile-308 is disordered. The span at Glu-287–Ser-306 shows a compositional bias: acidic residues. 7 LRR repeats span residues Glu-314–Tyr-340, Ser-341–Gln-366, Thr-367–Gly-392, Cys-393–Lys-420, His-566–Gly-594, Cys-595–Gly-622, and Cys-623–Tyr-648. Residues Cys-649, Cys-663, Cys-673, and Cys-674 each coordinate [2Fe-2S] cluster. The stretch at Pro-655–Glu-678 is one LRR 8 repeat.

As to quaternary structure, part of a SCF (SKP1-cullin-F-box) protein ligase complex. It depends on [2Fe-2S] cluster as a cofactor. Post-translationally, ubiquitinated upon iron and oxygen depletion, leading to its degradation by the proteasome. Ubiquitination is regulated by the hemerythrin-like region that acts as an oxygen and iron sensor.

The protein localises to the cytoplasm. The protein resides in the perinuclear region. It localises to the nucleus. The protein operates within protein modification; protein ubiquitination. Component of some SCF (SKP1-cullin-F-box) protein ligase complex that plays a central role in iron homeostasis by promoting the ubiquitination and subsequent degradation of ireb2/irp2. Upon high iron and oxygen level, it specifically recognizes and binds ireb2/irp2, promoting its ubiquitination and degradation by the proteasome. The polypeptide is F-box/LRR-repeat protein 5 (fbxl5) (Xenopus laevis (African clawed frog)).